The primary structure comprises 329 residues: NAC domain-containing protein 71 (329 aa).

The NAC domain maps to 9–166 (LPPGFRFHPT…DWVLCRIYNK (158 aa)). Residues 228–281 (RSGSADRDSMPRLHTDSSGSEHVLSPSPSPDDFPGGGDHDYAESQPSGGCGGWP) form a disordered region. The segment covering 230–242 (GSADRDSMPRLHT) has biased composition (basic and acidic residues).

In terms of assembly, interacts with NAC048 and NAC002. As to expression, expressed in roots and embryo. Weakly expressed in callus.

It localises to the nucleus. In terms of biological role, transcription activator that binds to the promoter of the stress response gene LEA19. Involved in tolerance to abiotic stresses. In Oryza sativa subsp. japonica (Rice), this protein is NAC domain-containing protein 71.